Consider the following 150-residue polypeptide: UPF0178 protein Rru_A0086 (150 aa).

Belongs to the UPF0178 family.

The sequence is that of UPF0178 protein Rru_A0086 from Rhodospirillum rubrum (strain ATCC 11170 / ATH 1.1.1 / DSM 467 / LMG 4362 / NCIMB 8255 / S1).